A 149-amino-acid polypeptide reads, in one-letter code: RALGPLIPSRLFDQFFGEGLLEYDLLPLFSSTISPYYRQSLFRSVLESGISEVRSDRDKFTIMLDVKHFSPEDLSVKIIDDFVEIHGKHSERQDDHGYISREFHRRYRLPANVDQSAITCSLSGDGMLTFSGPKVPSNMDPTHSERPIP.

The sHSP domain maps to 41 to 149; sequence LFRSVLESGI…DPTHSERPIP (109 aa). Residues His-89, Glu-91, His-96, and His-143 each coordinate Zn(2+).

The protein belongs to the small heat shock protein (HSP20) family. Heteropolymer composed of three CRYAA and one CRYAB subunits. Inter-subunit bridging via zinc ions enhances stability, which is crucial as there is no protein turn over in the lens. Can also form homodimers and homotetramers (dimers of dimers) which serve as the building blocks of homooligomers. Within homooligomers, the zinc-binding motif is created from residues of 3 different molecules. His-89 and Glu-91 from one molecule are ligands of the zinc ion, and His-96 and His-143 residues from additional molecules complete the site with tetrahedral coordination geometry.

Its subcellular location is the cytoplasm. The protein localises to the nucleus. Its function is as follows. Contributes to the transparency and refractive index of the lens. May act as a chaperone, preventing aggregation of various proteins under a wide range of stress conditions. The chain is Alpha-crystallin A chain (CRYAA) from Anas platyrhynchos (Mallard).